Consider the following 75-residue polypeptide: Kappa-scoloptoxin(03)-Ssm1d (75 aa).

An N-terminal signal peptide occupies residues 1–23 (MKLSMAILLVMALIIFTLDKNYS).

It belongs to the scoloptoxin-03 family. In terms of processing, contains 3 disulfide bonds. Expressed by the venom gland.

The protein localises to the secreted. Inhibits voltage-gated potassium channels. The sequence is that of Kappa-scoloptoxin(03)-Ssm1d from Scolopendra mutilans (Chinese red-headed centipede).